Here is a 381-residue protein sequence, read N- to C-terminus: Endophilin-A homolog (381 aa).

The membrane-binding amphipathic helix stretch occupies residues 1-21 (MSLSGLRKQFNKANQYLSETM). The 230-residue stretch at 18–247 (SETMGAAEPT…LGHRIKDAAA (230 aa)) folds into the BAR domain. A coiled-coil region spans residues 170–238 (CKKRQQRRDD…QCLENLQQQL (69 aa)). Positions 246 to 323 (AARPREEHVP…PPPLSQQQKP (78 aa)) are disordered. Over residues 260-271 (ANESRTPRSSFR) the composition is skewed to polar residues. Residues 305–317 (YQGPPPGGLPPPL) show a composition bias toward pro residues. The SH3 domain maps to 320 to 379 (QQKPQCRALFDFDAQSEGELDFKEGTLIELVSQIDENWYEGRVNGKTGLFPVTYVQVLVP).

Belongs to the endophilin family. In terms of assembly, may form a homodimer (via the BAR domain). As to expression, expressed in neurons and posterior intestine.

The protein resides in the synapse. It localises to the cytoplasmic vesicle. The protein localises to the secretory vesicle. It is found in the synaptic vesicle. Its subcellular location is the membrane. Involved in synaptic vesicle (SV) recycling in neurons probably by regulating clathrin-mediated endocytosis. By controlling SV endocytosis, regulates the rate of excitatory postsynaptic currents (EPSCs) at neuromuscular junctions and thus locomotion. In a similar manner, involved in necrotic neuronal cell death induced by abnormal hyperactivation of ion channels. Plays a minor role in responses to mechanical stimuli. Plays a minor role in unc-26/synaptojanin localization to synapses. This Caenorhabditis elegans protein is Endophilin-A homolog.